An 899-amino-acid polypeptide reads, in one-letter code: Solute carrier family 12 member 9 (899 aa).

Residues 1–44 are Cytoplasmic-facing; that stretch reads MTSESSPLLHYRLFSVSDGGLGPPDSSPIMTDAVTVGTGPTQRK. Residues 45–65 form a helical membrane-spanning segment; sequence LSTFFGVVVPTVLSMFSIVVF. Residues 66-80 lie on the Extracellular side of the membrane; that stretch reads MRIGFVVGHAGLLQS. Residues 81–101 traverse the membrane as a helical segment; the sequence is LLMLFVAYVIIWLTVLSVCAI. The Cytoplasmic segment spans residues 102–127; the sequence is STNGAVQGGGAYFMISRTLGPEFGGS. Residues 128-148 form a helical membrane-spanning segment; the sequence is IGLMFYLANVFACGVYVLGLV. Residues 149–176 are Extracellular-facing; sequence EAVLDVFGRDPSDVTDSLRSLPQGYGYS. Residues 177–197 form a helical membrane-spanning segment; it reads FLYASIILLLCMAICLVGASI. Topologically, residues 198 to 202 are cytoplasmic; the sequence is YSQAS. A helical transmembrane segment spans residues 203 to 223; it reads FFIFLLVFVVLLTILISFLAV. The Extracellular portion of the chain corresponds to 224 to 266; it reads RPLTVSIRHGGNVTMTGVYTGINSSTLHNNLQADYSLDYTTGN. N-linked (GlcNAc...) asparagine glycans are attached at residues Asn235 and Asn246. A helical transmembrane segment spans residues 267–287; sequence LMNFATVFAVMFNGCTGIMAG. The Cytoplasmic segment spans residues 288-304; sequence CNLSGELKQPSRSIPMG. A helical transmembrane segment spans residues 305–325; the sequence is TIIAVIITFFVYLILFIFTAF. Residues 326–347 are Extracellular-facing; the sequence is TCDRTLLREDYGFFRSINIWPP. Residues 348-368 traverse the membrane as a helical segment; that stretch reads FVLIGVYATSLSASMSTLIGA. Residues 369 to 393 are Cytoplasmic-facing; it reads SRILHALAKDDLFGVLLAPAKLVSK. Residues 394–414 form a helical membrane-spanning segment; that stretch reads GGNPWGAVVYTWALVQLVLLA. Residues 415–419 lie on the Extracellular side of the membrane; sequence GKLNT. Residues 420–440 form a helical membrane-spanning segment; the sequence is IAGIVTVFYLIAYAAIDLACL. Residues 441–469 are Cytoplasmic-facing; the sequence is ALEWASAPNFRPTFRFFSWHTCLLGILSS. The helical transmembrane segment at 470-490 threads the bilayer; the sequence is LVMMFLINPAYASGSIVLLLL. Topologically, residues 491–739 are extracellular; sequence LLGSIHFRSS…PLDLLRPQAS (249 aa). A helical transmembrane segment spans residues 740-760; the sequence is AYVDVCSLFLLQMACILNMAA. The Cytoplasmic segment spans residues 761-899; that stretch reads SWRRYQLRVF…GLTPVTCTEL (139 aa).

It belongs to the SLC12A transporter family.

It is found in the cell membrane. The protein resides in the lysosome membrane. In terms of biological role, seems to correspond to a subunit of a multimeric transport system and thus, additional subunits may be required for its function. May play a role in lysosomal ion flux and osmoregulation. The chain is Solute carrier family 12 member 9 (slc12a9) from Xenopus laevis (African clawed frog).